Reading from the N-terminus, the 281-residue chain is Very long chain fatty acid elongase 7 (281 aa).

Position 2 is an N-acetylalanine (Ala-2). Over 2-27 (AFSDLTSRTVRFYDNWIKDADPRVED) the chain is Lumenal. Residues 28-48 (YLLMSSPLPQTIILGLYVYFV) form a helical membrane-spanning segment. Topologically, residues 49–72 (TSLGPKLMENRKPFELKKAMITYN) are cytoplasmic. Residues 73-93 (FFIVLFSVYMCYEFVMSGWGT) form a helical membrane-spanning segment. Topologically, residues 94–115 (GYSFRCDIVDYSQSPRAMRMVH) are lumenal. A disulfide bridge links Cys-99 with Cys-231. A helical membrane pass occupies residues 116-136 (TCWLYYFSKFIELLDTIFFVL). Lys-124, Arg-137, Lys-139, Gln-142, and His-147 together coordinate 3-oxoeicosanoyl-CoA. At 137–142 (RKKNSQ) the chain is on the cytoplasmic side. Residues 143–162 (VTFLHVFHHTIMPWTWWFGV) form a helical membrane-spanning segment. The HxxHH motif signature appears at 147–151 (HVFHH). The active-site Nucleophile is His-150. The Lumenal segment spans residues 163–171 (KFAAGGLGT). A helical transmembrane segment spans residues 172 to 194 (FHAFLNTAVHVVMYSYYGLCAMG). Tyr-187, Lys-204, Thr-208, and Gln-211 together coordinate 3-oxoeicosanoyl-CoA. Over 195 to 206 (PAYQKYLWWKKH) the chain is Cytoplasmic. The helical transmembrane segment at 207-227 (LTSLQLVQFVLVTIHIGQIFF) threads the bilayer. Residues 228–236 (MEDCNYQYP) lie on the Lumenal side of the membrane. A helical membrane pass occupies residues 237-257 (VFLYIIMSYGCIFLLLFLHFW). Residues 258-281 (YRAYTKGQRLPKTLENGNCKSKRH) lie on the Cytoplasmic side of the membrane. Arg-266 contributes to the 3-oxoeicosanoyl-CoA binding site. The Di-lysine motif motif lies at 277–281 (KSKRH).

This sequence belongs to the ELO family. ELOVL7 subfamily. In terms of assembly, homodimer. Interacts with TECR.

The protein resides in the endoplasmic reticulum membrane. It catalyses the reaction a very-long-chain acyl-CoA + malonyl-CoA + H(+) = a very-long-chain 3-oxoacyl-CoA + CO2 + CoA. It carries out the reaction eicosanoyl-CoA + malonyl-CoA + H(+) = 3-oxodocosanoyl-CoA + CO2 + CoA. The enzyme catalyses (5Z,8Z,11Z,14Z)-eicosatetraenoyl-CoA + malonyl-CoA + H(+) = (7Z,10Z,13Z,16Z)-3-oxodocosatetraenoyl-CoA + CO2 + CoA. The catalysed reaction is (6Z,9Z,12Z)-octadecatrienoyl-CoA + malonyl-CoA + H(+) = (8Z,11Z,14Z)-3-oxoeicosatrienoyl-CoA + CO2 + CoA. It catalyses the reaction (9Z,12Z)-octadecadienoyl-CoA + malonyl-CoA + H(+) = (11Z,14Z)-3-oxoicosa-11,14-dienoyl-CoA + CO2 + CoA. It carries out the reaction (9Z)-octadecenoyl-CoA + malonyl-CoA + H(+) = 3-oxo-(11Z)-eicosenoyl-CoA + CO2 + CoA. The enzyme catalyses octadecanoyl-CoA + malonyl-CoA + H(+) = 3-oxoeicosanoyl-CoA + CO2 + CoA. The catalysed reaction is hexadecanoyl-CoA + malonyl-CoA + H(+) = 3-oxooctadecanoyl-CoA + CO2 + CoA. It catalyses the reaction (9Z,12Z,15Z)-octadecatrienoyl-CoA + malonyl-CoA + H(+) = (11Z,14Z,17Z)-3-oxoeicosatrienoyl-CoA + CO2 + CoA. It functions in the pathway lipid metabolism; fatty acid biosynthesis. Functionally, catalyzes the first and rate-limiting reaction of the four reactions that constitute the long-chain fatty acids elongation cycle. This endoplasmic reticulum-bound enzymatic process allows the addition of 2 carbons to the chain of long- and very long-chain fatty acids (VLCFAs) per cycle. Condensing enzyme with higher activity toward C18 acyl-CoAs, especially C18:3(n-3) acyl-CoAs and C18:3(n-6)-CoAs. Also active toward C20:4-, C18:0-, C18:1-, C18:2- and C16:0-CoAs, and weakly toward C20:0-CoA. Little or no activity toward C22:0-, C24:0-, or C26:0-CoAs. May participate in the production of saturated and polyunsaturated VLCFAs of different chain lengths that are involved in multiple biological processes as precursors of membrane lipids and lipid mediators. This chain is Very long chain fatty acid elongase 7, found in Mus musculus (Mouse).